A 214-amino-acid polypeptide reads, in one-letter code: Probable nicotinate-nucleotide adenylyltransferase (214 aa).

Belongs to the NadD family.

The catalysed reaction is nicotinate beta-D-ribonucleotide + ATP + H(+) = deamido-NAD(+) + diphosphate. Its pathway is cofactor biosynthesis; NAD(+) biosynthesis; deamido-NAD(+) from nicotinate D-ribonucleotide: step 1/1. Its function is as follows. Catalyzes the reversible adenylation of nicotinate mononucleotide (NaMN) to nicotinic acid adenine dinucleotide (NaAD). The protein is Probable nicotinate-nucleotide adenylyltransferase of Mycobacterium tuberculosis (strain ATCC 25177 / H37Ra).